Consider the following 502-residue polypeptide: ATP synthase subunit alpha (502 aa).

Glycine 169–threonine 176 is a binding site for ATP.

This sequence belongs to the ATPase alpha/beta chains family. F-type ATPases have 2 components, CF(1) - the catalytic core - and CF(0) - the membrane proton channel. CF(1) has five subunits: alpha(3), beta(3), gamma(1), delta(1), epsilon(1). CF(0) has three main subunits: a(1), b(2) and c(9-12). The alpha and beta chains form an alternating ring which encloses part of the gamma chain. CF(1) is attached to CF(0) by a central stalk formed by the gamma and epsilon chains, while a peripheral stalk is formed by the delta and b chains.

It is found in the cell membrane. It catalyses the reaction ATP + H2O + 4 H(+)(in) = ADP + phosphate + 5 H(+)(out). In terms of biological role, produces ATP from ADP in the presence of a proton gradient across the membrane. The alpha chain is a regulatory subunit. The chain is ATP synthase subunit alpha from Clostridium perfringens (strain ATCC 13124 / DSM 756 / JCM 1290 / NCIMB 6125 / NCTC 8237 / Type A).